A 267-amino-acid chain; its full sequence is DNA damage-regulated autophagy modulator protein 2 (267 aa).

Helical transmembrane passes span 8-28 (LSFLPSALVIWTFATFIFSYI), 53-73 (RCLFGVMLNIAAVLGIATMYV), 87-107 (LIIKLNKAGLVLGILSCLGLS), 118-138 (FIVHVCGAVLAFSMGSFYMFV), 160-180 (LLLVIWCGVSALSMMTCSSIL), and 203-223 (VLHLVTTAAEWSMSFSFFGFF).

It belongs to the DRAM/TMEM150 family. As to expression, expressed in the retina.

It localises to the lysosome membrane. Its subcellular location is the photoreceptor inner segment. It is found in the apical cell membrane. Functionally, plays a role in the initiation of autophagy. In the retina, might be involved in the process of photoreceptor cells renewal and recycling to preserve visual function. Induces apoptotic cell death when coexpressed with DRAM1. This Mus musculus (Mouse) protein is DNA damage-regulated autophagy modulator protein 2 (Dram2).